A 211-amino-acid chain; its full sequence is Small ribosomal subunit protein uS3 (211 aa).

In terms of domain architecture, KH type-2 spans 38 to 106 (LRKFIKKAFY…NIELNIIEVK (69 aa)).

This sequence belongs to the universal ribosomal protein uS3 family. In terms of assembly, part of the 30S ribosomal subunit. Forms a tight complex with proteins S10 and S14.

In terms of biological role, binds the lower part of the 30S subunit head. Binds mRNA in the 70S ribosome, positioning it for translation. This is Small ribosomal subunit protein uS3 from Ehrlichia ruminantium (strain Gardel).